Reading from the N-terminus, the 560-residue chain is Probable 2,3-bisphosphoglycerate-independent phosphoglycerate mutase 2 (560 aa).

Gly-2 carries the N-acetylglycine modification. Asp-29 and Ser-82 together coordinate Mn(2+). The active-site Phosphoserine intermediate is Ser-82. Residues His-141, 171–172 (RD), Arg-207, Arg-214, 287–290 (RADR), and Lys-362 contribute to the substrate site. Mn(2+) contacts are provided by Asp-431, His-435, Asp-472, His-473, and His-502.

Belongs to the BPG-independent phosphoglycerate mutase family. Monomer. It depends on Mn(2+) as a cofactor.

It localises to the cytoplasm. It catalyses the reaction (2R)-2-phosphoglycerate = (2R)-3-phosphoglycerate. The protein operates within carbohydrate degradation; glycolysis; pyruvate from D-glyceraldehyde 3-phosphate: step 3/5. Functionally, catalyzes the interconversion of 2-phosphoglycerate (2-PGA) and 3-phosphoglycerate (3-PGA). Required for guard cell function (e.g. blue light-, abscisic acid- (ABA), and low CO(2)-regulated stomatal movements) and fertility (e.g. pollen grains production). The chain is Probable 2,3-bisphosphoglycerate-independent phosphoglycerate mutase 2 (PGM2) from Arabidopsis thaliana (Mouse-ear cress).